A 118-amino-acid chain; its full sequence is Probable non-functional immunoglobulin lambda variable 2-33 (118 aa).

Residues 1-19 (MAWALLLLTLLTQGTGSWA) form the signal peptide. Residues 20-44 (QSALTQPPFVSGAPGQSVTISCTGT) form a framework-1 region. In terms of domain architecture, Ig-like spans 34–118 (GQSVTISCTG…CSLYSSSYTF (85 aa)). Cysteine 41 and cysteine 109 form a disulfide bridge. The complementarity-determining-1 stretch occupies residues 45-53 (SSDVGDYDH). Residues 54 to 70 (VFWYQKRLSTTSRLLIY) form a framework-2 region. Positions 71–73 (NVN) are complementarity-determining-2. The segment at 74-109 (TRPSGISDLFSGSKSGNMASLTISGLKSEVEANYHC) is framework-3. Residues 110-118 (SLYSSSYTF) are complementarity-determining-3.

As to quaternary structure, immunoglobulins are composed of two identical heavy chains and two identical light chains; disulfide-linked.

It is found in the secreted. The protein localises to the cell membrane. Its function is as follows. Probable non-functional open reading frame (ORF) of V region of the variable domain of immunoglobulin light chains. Non-functional ORF generally cannot participate in the synthesis of a productive immunoglobulin chain due to altered V-(D)-J or switch recombination and/or splicing site (at mRNA level) and/or conserved amino acid change (protein level). Immunoglobulins, also known as antibodies, are membrane-bound or secreted glycoproteins produced by B lymphocytes. In the recognition phase of humoral immunity, the membrane-bound immunoglobulins serve as receptors which, upon binding of a specific antigen, trigger the clonal expansion and differentiation of B lymphocytes into immunoglobulins-secreting plasma cells. Secreted immunoglobulins mediate the effector phase of humoral immunity, which results in the elimination of bound antigens. The antigen binding site is formed by the variable domain of one heavy chain, together with that of its associated light chain. Thus, each immunoglobulin has two antigen binding sites with remarkable affinity for a particular antigen. The variable domains are assembled by a process called V-(D)-J rearrangement and can then be subjected to somatic hypermutations which, after exposure to antigen and selection, allow affinity maturation for a particular antigen. This is Probable non-functional immunoglobulin lambda variable 2-33 from Homo sapiens (Human).